A 42-amino-acid polypeptide reads, in one-letter code: Large ribosomal subunit protein bL36 (42 aa).

It belongs to the bacterial ribosomal protein bL36 family.

The protein is Large ribosomal subunit protein bL36 of Wolbachia sp. subsp. Brugia malayi (strain TRS).